The primary structure comprises 169 residues: Centrin-1 (169 aa).

The essential for homooligomerization stretch occupies residues 1-21 (MHSRKGASSLPRGRGAGKKTE). The disordered stretch occupies residues 1-25 (MHSRKGASSLPRGRGAGKKTELTEE). EF-hand domains follow at residues 25 to 60 (EQRQ…LGFE), 61 to 96 (PKKE…KMAE), 98 to 133 (DPRE…LGEN), and 134 to 169 (LTDE…TNLF). Residues D38, D40, S42, C44, E49, D74, D76, T78, S80, and E85 each contribute to the Ca(2+) site.

The protein belongs to the centrin family. In terms of assembly, monomer. Homooligomerizes in a Ca(2+)-dependent manner. Interaction via the C-terminus with other proteins disrupts and/or prevents homooligomerization. Interacts with SFI1.

The protein resides in the cytoplasm. The protein localises to the cytoskeleton. It localises to the microtubule organizing center. Its subcellular location is the centrosome. Its function is as follows. Acts as a calcium sensor. Part of the centrosome outer core complex. This Toxoplasma gondii (strain ATCC 50611 / Me49) protein is Centrin-1.